A 116-amino-acid chain; its full sequence is Hydrogenase maturation factor HypA (116 aa).

Position 2 (His-2) interacts with Ni(2+). Zn(2+) is bound by residues Cys-73, Cys-76, Cys-90, and Cys-93.

The protein belongs to the HypA/HybF family.

Its function is as follows. Involved in the maturation of [NiFe] hydrogenases. Required for nickel insertion into the metal center of the hydrogenase. The protein is Hydrogenase maturation factor HypA of Escherichia coli O157:H7.